The sequence spans 485 residues: Threonine synthase-like 2 (485 aa).

K113 is subject to N6-(pyridoxal phosphate)lysine.

The protein belongs to the threonine synthase family. Pyridoxal 5'-phosphate serves as cofactor.

Acts as a catabolic phospho-lyase on both gamma- and beta-phosphorylated substrates. Degrades O-phospho-threonine (PThr) to alpha-ketobutyrate, ammonia and phosphate. The protein is Threonine synthase-like 2 (Thnsl2) of Rattus norvegicus (Rat).